Reading from the N-terminus, the 312-residue chain is MKKAIYLLILCIFGLFSVYFTYAENISDISNTTSKNISSSNISHNNIIYSNINYNEILYIIVKNNTAYVKDVINGTNNPYHIKSAGIILYEKIYGYNYSNLLYRNSSNSLIFYYNFSVDKINYTINITIPQIEDYVGSLGGPIRMRIPPNNVKIIIVAENKLAETNGKYILEYNKTDKKVISLIYLDNVSSICNIYYTKFFNSSEFYGYAVANVTSITENRTSYTIKNPKGTFTFDRKYNVFVSNKTAYLKEPYLYVKLYNSTIDDIIILENNKISENSTKFMSNYLLSFIGIIIGFGIIGLAIYLSKRGRK.

The next 2 helical transmembrane spans lie at 4–24 (AIYL…TYAE) and 286–306 (YLLS…AIYL).

The protein localises to the cell membrane. This is an uncharacterized protein from Methanocaldococcus jannaschii (strain ATCC 43067 / DSM 2661 / JAL-1 / JCM 10045 / NBRC 100440) (Methanococcus jannaschii).